The sequence spans 212 residues: Probable GTP-binding protein EngB (212 aa).

Residues 38–210 (SLPEIAFVGK…KASLAKCIKP (173 aa)) form the EngB-type G domain. Residues 46-53 (GKSNVGKS), 73-77 (GRTRQ), 91-94 (DLPG), 158-161 (TKSD), and 189-191 (VSS) contribute to the GTP site. S53 and T75 together coordinate Mg(2+).

It belongs to the TRAFAC class TrmE-Era-EngA-EngB-Septin-like GTPase superfamily. EngB GTPase family. It depends on Mg(2+) as a cofactor.

Necessary for normal cell division and for the maintenance of normal septation. This Rickettsia felis (strain ATCC VR-1525 / URRWXCal2) (Rickettsia azadi) protein is Probable GTP-binding protein EngB.